A 403-amino-acid chain; its full sequence is Enoyl-[acyl-carrier-protein] reductase [NADH] (403 aa).

NAD(+) contacts are provided by residues 49-54 (GASSGY), 75-76 (FE), 112-113 (DA), and 141-142 (LA). Tyr227 is a substrate binding site. Tyr237 functions as the Proton donor in the catalytic mechanism. NAD(+) contacts are provided by residues Lys246 and 276–278 (VVT).

It belongs to the TER reductase family. As to quaternary structure, monomer.

The catalysed reaction is a 2,3-saturated acyl-[ACP] + NAD(+) = a (2E)-enoyl-[ACP] + NADH + H(+). The protein operates within lipid metabolism; fatty acid biosynthesis. Functionally, involved in the final reduction of the elongation cycle of fatty acid synthesis (FAS II). Catalyzes the reduction of a carbon-carbon double bond in an enoyl moiety that is covalently linked to an acyl carrier protein (ACP). In Pseudomonas putida (strain GB-1), this protein is Enoyl-[acyl-carrier-protein] reductase [NADH].